Consider the following 693-residue polypeptide: MNNKADSFFWNLRQFSTLVPTSRTMRLYRLGLCKPKIVHSNWNILSNFHNRMRSTDIIRYLFQDAFIFKSDVGFQTKGISTLTARRIERLLYARRLFFDSKQSLVPVDKSDDGLKKVNLNHEVSNEDVLTKETKPNRISSRKLSQECNSLSDVLDAFSKAPTFPSSNYFTAMWTIAKRLSDGQKRFEKRLMFSHPAFNQLCEHMMREAKIMQYKYLLFSLYSMVKLGIPQNTILVQTLLRVTQERINECDETCLSVLSAVLEAMEPCKNVHVLQMGFRILVDQQVWKIEDVFTLQVVMKCIGKDAPIALKRKLEMKALRELDRFSVLNSQHMFEVLAAMNHRSLTLLDECSKVVLDNIHGCPLRIMINILQSCKDLQYHNLDLFKGLADYVAATFDIWKFRKVLFILILFENLGFRPVGLMDLFMKRIVEDPESLNMKNILPTLHTYSSLNHVYKCQNKEQFLEVMASALTGYLHTISSENLLHAVYSFCLMNYFPLAPFNQLLQKDVISELLTSDDMKNVYKLHMLDTCLKLDDTVYLKDIALSLPQLPRELPPSHPNAKVAEVLSSLLGGEGHFSKDVHLPHNYHIDFEIRMDTNRNQVLPLSDVDTTSATDIQRVAVLCVSRSAYCLGSSHPRGFLAMKMRHLNAMGFRVILVNNWEMDKLEMEDAVTFLKTKIYSVEALPVAAVNVQST.

Phosphoserine is present on residues serine 110 and serine 124. The region spanning valine 618–threonine 675 is the RAP domain. Serine 692 is subject to Phosphoserine.

It belongs to the FAST kinase family. Monomer. Found in a complex with GRSF1, DDX28, DHX30 and FASTKD5. Associates with the 16S mitochondrial rRNA (16S mt-rRNA). Forms a regulatory protein-RNA complex, consisting of RCC1L, NGRN, RPUSD3, RPUSD4, TRUB2, FASTKD2 and 16S mt-rRNA.

The protein localises to the mitochondrion matrix. Its subcellular location is the mitochondrion nucleoid. Its function is as follows. Plays an important role in assembly of the mitochondrial large ribosomal subunit. As a component of a functional protein-RNA module, consisting of RCC1L, NGRN, RPUSD3, RPUSD4, TRUB2, FASTKD2 and 16S mitochondrial ribosomal RNA (16S mt-rRNA), controls 16S mt-rRNA abundance and is required for intra-mitochondrial translation. May play a role in mitochondrial apoptosis. The sequence is that of FAST kinase domain-containing protein 2, mitochondrial (FASTKD2) from Pongo abelii (Sumatran orangutan).